A 70-amino-acid polypeptide reads, in one-letter code: Cold shock protein CspV (70 aa).

The 61-residue stretch at 7–67 (GSVKWFNETK…GKKGPQASNV (61 aa)) folds into the CSD domain.

It localises to the cytoplasm. The protein is Cold shock protein CspV (cspV) of Vibrio cholerae serotype O1 (strain ATCC 39315 / El Tor Inaba N16961).